The sequence spans 432 residues: Neuronal pentraxin-1 (432 aa).

Positions 1–22 (MPAGRAARTCALLALCLLGAGA) are cleaved as a signal peptide. Residues 90–122 (ESQSTLDPGAGEARAGGGRKQPGSGKNTMGDLS) are disordered. Asparagine 154 and asparagine 193 each carry an N-linked (GlcNAc...) asparagine glycan. A Pentraxin (PTX) domain is found at 226–428 (DKFQLTFPLR…GATKWTFEAC (203 aa)). Cysteine 256 and cysteine 316 are joined by a disulfide. Ca(2+) contacts are provided by asparagine 280, glutamate 358, glutamine 359, aspartate 360, and glutamine 370.

Homooligomer or heterooligomer (probably pentamer) with neuronal pentraxin receptor (NPTXR). The cofactor is Ca(2+).

It is found in the secreted. The protein localises to the cytoplasmic vesicle. It localises to the secretory vesicle. Its subcellular location is the endoplasmic reticulum. Functionally, may be involved in mediating uptake of synaptic material during synapse remodeling or in mediating the synaptic clustering of AMPA glutamate receptors at a subset of excitatory synapses. The protein is Neuronal pentraxin-1 (NPTX1) of Homo sapiens (Human).